The primary structure comprises 127 residues: Protein ApaG (127 aa).

One can recognise an ApaG domain in the interval 3-127 (DADVYAISVE…FVLAIPRTLH (125 aa)).

This is Protein ApaG from Stenotrophomonas maltophilia (strain K279a).